The following is a 110-amino-acid chain: uncharacterized protein (110 aa).

Residues 1–72 (MWRSSNQRGV…NHRNIHLRNP (72 aa)) form a disordered region. Residues 10 to 23 (VSRRRDKSMRKYTR) show a composition bias toward basic residues. Positions 48–57 (KNTYTGNISS) are enriched in polar residues.

This is an uncharacterized protein from Human herpesvirus 6A (strain Uganda-1102) (HHV-6 variant A).